Here is a 358-residue protein sequence, read N- to C-terminus: Arginine kinase (358 aa).

The region spanning 6–88 is the Phosphagen kinase N-terminal domain; it reads SVEELWAKLD…LDAVIKEYHK (83 aa). Substrate is bound at residue 61 to 65; the sequence is GVGIY. A Phosphagen kinase C-terminal domain is found at 116-353; that stretch reads YIVSTRVRVG…EACLAKEKEL (238 aa). ATP-binding positions include 119 to 123 and His-182; that span reads STRVR. A substrate-binding site is contributed by Glu-222. Residue Arg-226 coordinates ATP. Cys-269 serves as a coordination point for substrate. ATP-binding positions include 278-282 and 306-311; these read RASVH and RGIHGE. Glu-311 is a binding site for substrate.

It belongs to the ATP:guanido phosphotransferase family. In terms of assembly, monomer.

It catalyses the reaction L-arginine + ATP = N(omega)-phospho-L-arginine + ADP + H(+). This is Arginine kinase from Haliotis madaka (Giant abalone).